The primary structure comprises 103 residues: Seminal ribonuclease (103 aa).

4 disulfides stabilise this stretch: Cys-12-Cys-70, Cys-26-Cys-81, Cys-44-Cys-96, and Cys-51-Cys-58. Substrate-binding positions include 27-31 (KLVNT), Lys-52, and Arg-71.

It belongs to the pancreatic ribonuclease family. As to quaternary structure, homodimer; disulfide-linked.

The protein localises to the secreted. It catalyses the reaction an [RNA] containing cytidine + H2O = an [RNA]-3'-cytidine-3'-phosphate + a 5'-hydroxy-ribonucleotide-3'-[RNA].. The catalysed reaction is an [RNA] containing uridine + H2O = an [RNA]-3'-uridine-3'-phosphate + a 5'-hydroxy-ribonucleotide-3'-[RNA].. In terms of biological role, this enzyme hydrolyzes both single- and double-stranded RNA. This is Seminal ribonuclease (SRN) from Cephalophus silvicultor (Yellow-backed duiker).